A 252-amino-acid chain; its full sequence is Probable transcriptional regulatory protein Caur_1043 (252 aa).

The span at 1 to 14 (MSGHSKWHTIRRTK) shows a compositional bias: basic residues. Positions 1 to 22 (MSGHSKWHTIRRTKGVNDQRRG) are disordered.

Belongs to the TACO1 family.

It is found in the cytoplasm. The chain is Probable transcriptional regulatory protein Caur_1043 from Chloroflexus aurantiacus (strain ATCC 29366 / DSM 635 / J-10-fl).